The following is a 288-amino-acid chain: GTP-binding protein 8 (288 aa).

An EngB-type G domain is found at 109-282 (HRPEVCFIGR…RCFIADITGN (174 aa)). Residues 117 to 124 (GRSNVGKS), 146 to 150 (GHTKK), 164 to 167 (DMPG), 226 to 229 (TKID), and 261 to 263 (VSA) each bind GTP. Residues serine 124 and threonine 148 each coordinate Mg(2+).

It belongs to the TRAFAC class TrmE-Era-EngA-EngB-Septin-like GTPase superfamily. EngB GTPase family. The cofactor is Mg(2+).

The protein is GTP-binding protein 8 (GTPBP8) of Bos taurus (Bovine).